Here is a 401-residue protein sequence, read N- to C-terminus: Argininosuccinate synthase (401 aa).

Residues 10-18 (AYSGGVDTS) and Ala-38 each bind ATP. Tyr-89 contacts L-citrulline. An ATP-binding site is contributed by Gly-119. L-aspartate contacts are provided by Thr-121, Asn-125, and Asp-126. Asn-125 contacts L-citrulline. L-citrulline-binding residues include Arg-129, Ser-177, Ser-186, Glu-262, and Tyr-274.

Belongs to the argininosuccinate synthase family. Type 1 subfamily. Homotetramer.

It is found in the cytoplasm. The catalysed reaction is L-citrulline + L-aspartate + ATP = 2-(N(omega)-L-arginino)succinate + AMP + diphosphate + H(+). It participates in amino-acid biosynthesis; L-arginine biosynthesis; L-arginine from L-ornithine and carbamoyl phosphate: step 2/3. This chain is Argininosuccinate synthase, found in Microcystis aeruginosa (strain NIES-843 / IAM M-2473).